We begin with the raw amino-acid sequence, 37 residues long: Large ribosomal subunit protein bL36 (37 aa).

It belongs to the bacterial ribosomal protein bL36 family.

The polypeptide is Large ribosomal subunit protein bL36 (Synechococcus elongatus (strain ATCC 33912 / PCC 7942 / FACHB-805) (Anacystis nidulans R2)).